Here is a 93-residue protein sequence, read N- to C-terminus: MEHGEKNITIVDDQGNEQLCEVLFTFENEEFGKSYVLYYPIESKDDEEVEILASSFTPNEDGENGELFPIETDEEWDMIEETLNTFLADEDEE.

This sequence belongs to the UPF0473 family.

This Bacillus subtilis (strain 168) protein is UPF0473 protein YrzB (yrzB).